An 84-amino-acid polypeptide reads, in one-letter code: Small ribosomal subunit protein uS15 (84 aa).

The protein belongs to the universal ribosomal protein uS15 family. Part of the 30S ribosomal subunit. Forms a bridge to the 50S subunit in the 70S ribosome, contacting the 23S rRNA.

One of the primary rRNA binding proteins, it binds directly to 16S rRNA where it helps nucleate assembly of the platform of the 30S subunit by binding and bridging several RNA helices of the 16S rRNA. In terms of biological role, forms an intersubunit bridge (bridge B4) with the 23S rRNA of the 50S subunit in the ribosome. This chain is Small ribosomal subunit protein uS15, found in Fervidobacterium nodosum (strain ATCC 35602 / DSM 5306 / Rt17-B1).